Here is a 960-residue protein sequence, read N- to C-terminus: Gamma-aminobutyric acid type B receptor subunit 1 (960 aa).

Positions 1-19 are cleaved as a signal peptide; it reads MLLLLLVPLFLRPLGAGGA. Residues 20-590 lie on the Extracellular side of the membrane; sequence QTPNVTSEGC…KTFRFLSQKL (571 aa). 2 N-linked (GlcNAc...) asparagine glycosylation sites follow: Asn-23 and Asn-83. Sushi domains lie at 29–95 and 97–158; these read CQII…PSRC and RICS…HCQV. Disulfide bonds link Cys-99–Cys-144, Cys-130–Cys-156, and Cys-219–Cys-245. Ser-246, Ser-269, His-286, and Tyr-366 together coordinate 4-aminobutanoate. Cys-375 and Cys-409 form a disulfide bridge. N-linked (GlcNAc...) asparagine glycans are attached at residues Asn-408 and Asn-439. Glu-465 lines the 4-aminobutanoate pocket. N-linked (GlcNAc...) asparagine glycosylation is found at Asn-481, Asn-501, and Asn-513. Residues 591-611 form a helical membrane-spanning segment; sequence FISVSVLSSLGIVLAVVCLSF. The Cytoplasmic portion of the chain corresponds to 612 to 630; the sequence is NIYNSHVRYIQNSQPNLNN. A helical transmembrane segment spans residues 631 to 651; the sequence is LTAVGCSLALAAVFPLGLDGY. The Extracellular portion of the chain corresponds to 652–666; that stretch reads HIGRSQFPFVCQARL. A helical transmembrane segment spans residues 667–687; the sequence is WLLGLGFSLGYGSMFTKIWWV. At 688-709 the chain is on the cytoplasmic side; sequence HTVFTKKEEKKEWRKTLEPWKL. A helical transmembrane segment spans residues 710–730; sequence YATVGLLVGMDILTLAIWQIV. At 731–767 the chain is on the extracellular side; that stretch reads DPLHRTIETFAKEEPKEDIDVSILPQLEHCSSKKMNT. The helical transmembrane segment at 768–788 threads the bilayer; it reads WLGIFYGYKGLLLLLGIFLAY. At 789 to 803 the chain is on the cytoplasmic side; it reads ETKSVSTEKINDHRA. The helical transmembrane segment at 804–824 threads the bilayer; sequence VGMAIYNVAVLCLITAPVTMI. Residues 825–832 are Extracellular-facing; sequence LSSQQDAA. A helical membrane pass occupies residues 833 to 853; sequence FAFASLAIVFSSYITLVVLFV. Residues 854 to 960 are Cytoplasmic-facing; that stretch reads PKMRRLITRG…DGSRVHLLYK (107 aa). Disordered regions lie at residues 866–891 and 908–960; these read QSEA…RLLE and VSEL…LLYK. Residues 867-879 show a composition bias toward polar residues; the sequence is SEAQDTMKTGSST. The stretch at 868–924 forms a coiled coil; that stretch reads EAQDTMKTGSSTNNNEEEKSRLLEKENRELEKIIAEKEERVSELRHQLQSRQQIRSR. Thr-872 is modified (phosphothreonine). The tract at residues 887–915 is interaction with ATF4; it reads SRLLEKENRELEKIIAEKEERVSELRHQL. Residue Thr-929 is modified to Phosphothreonine.

It belongs to the G-protein coupled receptor 3 family. GABA-B receptor subfamily. As to quaternary structure, heterodimer of GABBR1 and GABBR2. Homodimers may form, but are inactive. Interacts (via C-terminus) with ATF4 (via leucine zipper domain). Interacts with JAKMIP1. Interacts with KCTD8, KCTD12, KCTD12B and KCTD16; this interaction determines the pharmacology and kinetics of the receptor response, the KCTD proteins markedly accelerating the GABA-B response, although to different extents. Expressed in neuronal tissue including cortex, cerebellum and spinal cord. Not detected in non-neuronal tissues including heart, liver, spleen and kidney.

Its subcellular location is the cell membrane. It localises to the postsynaptic cell membrane. The protein resides in the cell projection. It is found in the dendrite. Its function is as follows. Component of a heterodimeric G-protein coupled receptor for GABA, formed by GABBR1 and GABBR2. Within the heterodimeric GABA receptor, only GABBR1 seems to bind agonists, while GABBR2 mediates coupling to G proteins. Ligand binding causes a conformation change that triggers signaling via guanine nucleotide-binding proteins (G proteins) and modulates the activity of down-stream effectors, such as adenylate cyclase. Signaling inhibits adenylate cyclase, stimulates phospholipase A2, activates potassium channels, inactivates voltage-dependent calcium-channels and modulates inositol phospholipid hydrolysis. Calcium is required for high affinity binding to GABA. Plays a critical role in the fine-tuning of inhibitory synaptic transmission. Pre-synaptic GABA receptor inhibits neurotransmitter release by down-regulating high-voltage activated calcium channels, whereas postsynaptic GABA receptor decreases neuronal excitability by activating a prominent inwardly rectifying potassium (Kir) conductance that underlies the late inhibitory postsynaptic potentials. Not only implicated in synaptic inhibition but also in hippocampal long-term potentiation, slow wave sleep, muscle relaxation and antinociception. The protein is Gamma-aminobutyric acid type B receptor subunit 1 (Gabbr1) of Mus musculus (Mouse).